Here is a 285-residue protein sequence, read N- to C-terminus: Probable cobalamin biosynthesis protein CobD (285 aa).

Helical transmembrane passes span 10-32 (LIDL…GKVI), 45-67 (YLDF…ILSH), 145-167 (VIAP…RAVN), and 266-283 (VYWI…IILY).

Belongs to the CobD/CbiB family.

It is found in the cell membrane. The protein operates within cofactor biosynthesis; adenosylcobalamin biosynthesis. In terms of biological role, converts cobyric acid to cobinamide by the addition of aminopropanol on the F carboxylic group. This chain is Probable cobalamin biosynthesis protein CobD, found in Pyrococcus furiosus (strain ATCC 43587 / DSM 3638 / JCM 8422 / Vc1).